The following is a 445-amino-acid chain: MGRLFGTDGVRGLANTELTAELALQVASAAATVLASPGSGGRKTAVVGRDPRASGEMLEAAVVAGLTSAGVDVLNVGVLPTPAVAFLTAELDAALGVMISASHNPMPDNGIKIFAAGGHKLDDEVEDRIESVATGTATRRAPTGAGIGRVHTVPDAADRYLQHLTTALPNRLDGLTVVVDCAHGAASDVAPAAYRAAGATVVAINAEPDGLNINENCGSTHLEGLQKAVVRHGADLGLAHDGDADRCLAVDAGGSLVDGDAIMTVLALGMRDAGELVDDTLVATVMSNLGLHIAMREAGISLVTTAVGDRYVLEGLRSGGFSLGGEQSGHVVFPAFGTTGDGVLTGLRLMGRMAETGQPIAELASAMTTLPQVLVNVKVADKRAVAASPVVLDAVLAAERSLGENGRVLLRPSGTEQLVRVMVEASDLEVARKLADELAGTVASV.

Residue S102 is the Phosphoserine intermediate of the active site. The Mg(2+) site is built by S102, D241, D243, and D245. At S102 the chain carries Phosphoserine.

The protein belongs to the phosphohexose mutase family. Mg(2+) is required as a cofactor. Post-translationally, activated by phosphorylation.

It carries out the reaction alpha-D-glucosamine 1-phosphate = D-glucosamine 6-phosphate. Catalyzes the conversion of glucosamine-6-phosphate to glucosamine-1-phosphate. In Rhodococcus opacus (strain B4), this protein is Phosphoglucosamine mutase.